Reading from the N-terminus, the 112-residue chain is Iron-sulfur cluster insertion protein ErpA (112 aa).

3 residues coordinate iron-sulfur cluster: C40, C104, and C106.

It belongs to the HesB/IscA family. As to quaternary structure, homodimer. Iron-sulfur cluster serves as cofactor.

Functionally, required for insertion of 4Fe-4S clusters for at least IspG. In Pseudoalteromonas translucida (strain TAC 125), this protein is Iron-sulfur cluster insertion protein ErpA.